A 196-amino-acid polypeptide reads, in one-letter code: dTDP-4-dehydro-6-deoxyglucose 3-epimerase (196 aa).

Substrate-binding positions include Arg21, Glu26, 45 to 47 (QVN), and Arg57. His60 acts as the Proton acceptor in catalysis. The substrate site is built by Lys70 and Arg117. Residue Tyr130 is the Proton donor of the active site. Residues Glu141 and Arg166 each contribute to the substrate site.

It belongs to the dTDP-4-dehydrorhamnose 3,5-epimerase family. Homodimer.

The enzyme catalyses dTDP-4-dehydro-6-deoxy-alpha-D-glucose = dTDP-4-dehydro-6-deoxy-alpha-D-allose. It participates in antibiotic biosynthesis. In terms of biological role, involved in the biosynthesis of dTDP-6-deoxy-D-allose, an intermediate in the biosynthesis of mycinose, which is one of the two unusual sugars attached to the 16-membered macrolactone ring of the aglycone antibiotic dihydrochalcomycin (GERI-155). Catalyzes the conversion of dTDP-4-oxo-6-deoxyglucose to dTDP-4-oxo-6-deoxyallose, via a C-3 epimerization. The protein is dTDP-4-dehydro-6-deoxyglucose 3-epimerase of Streptomyces sp.